The primary structure comprises 236 residues: Small ribosomal subunit protein uS10m (236 aa).

Residues 1–24 (MMRQSIRPLRAFSSEVSWIARRTQ) constitute a mitochondrion transit peptide. A disordered region spans residues 29–49 (KPGDLVPNKPEPSKNEQEPRF). Positions 39–49 (EPSKNEQEPRF) are enriched in basic and acidic residues.

It belongs to the universal ribosomal protein uS10 family. As to quaternary structure, part of the mitochondrial small ribosomal subunit.

It localises to the mitochondrion. Involved in mitochondrial genome encoded proteins translation. Involved in the binding of tRNA to the ribosomes. In Gibberella zeae (strain ATCC MYA-4620 / CBS 123657 / FGSC 9075 / NRRL 31084 / PH-1) (Wheat head blight fungus), this protein is Small ribosomal subunit protein uS10m (RSM10).